Reading from the N-terminus, the 570-residue chain is Trans-cinnamate:CoA ligase, peroxisomal (570 aa).

Positions 568–570 (ARL) match the Microbody targeting signal motif.

This sequence belongs to the ATP-dependent AMP-binding enzyme family. Monomer. It depends on K(+) as a cofactor. Mostly expressed in flower organs, with highest levels in corollas and petal limbs, and, to a lesser extent, in petal tubes, sepals, pistils, stamen, stigma, anthers and ovaries. Also present at low levels in leaves, stems and roots.

The protein localises to the peroxisome. It carries out the reaction (E)-4-coumarate + ATP + CoA = (E)-4-coumaroyl-CoA + AMP + diphosphate. It catalyses the reaction (E)-caffeate + ATP + CoA = (E)-caffeoyl-CoA + AMP + diphosphate. The enzyme catalyses (E)-cinnamate + ATP + CoA = (E)-cinnamoyl-CoA + AMP + diphosphate. Its pathway is phenylpropanoid metabolism; trans-cinnamate biosynthesis. It functions in the pathway phytoalexin biosynthesis; 3,4',5-trihydroxystilbene biosynthesis; 3,4',5-trihydroxystilbene from trans-4-coumarate: step 1/2. In terms of biological role, involved in the biosynthesis of floral volatile benzenoid/phenylpropanoid (FVBP) scent (e.g. benzylbenzoate, phenylethylbenzoate, and methylbenzoate). Catalyzes the formation of CoA esters of cinnamic acid, and, with lower efficiency, of 4-coumaric acid and caffeic acid. This chain is Trans-cinnamate:CoA ligase, peroxisomal, found in Petunia hybrida (Petunia).